The following is a 1151-amino-acid chain: Zinc finger protein ZFPM2 (1151 aa).

Residues 1-13 show a composition bias toward basic residues; sequence MSRRKQSKPRQIK. The interval 1 to 102 is disordered; the sequence is MSRRKQSKPR…ETDDWDGPGE (102 aa). Acidic residues-rich tracts occupy residues 18 to 33 and 70 to 82; these read DAIE…EETD and EGIQ…DGDT. A CCHC FOG-type 1 zinc finger spans residues 244–277; sequence IVNKDIFPCKSCGIWYRSERNLQAHLMYYCSGRQ. Residues cysteine 252, cysteine 255, histidine 268, and cysteine 273 each contribute to the Zn(2+) site. The C2H2-type 1 zinc-finger motif lies at 296 to 320; that stretch reads SLCPFPQCTKSFSNARALEMHLNSH. Residue lysine 324 forms a Glycyl lysine isopeptide (Lys-Gly) (interchain with G-Cter in SUMO1) linkage. C2H2-type zinc fingers lie at residues 335 to 357 and 363 to 385; these read LKCT…LFSH and FRCN…QELH. Residues 389–487 are disordered; it reads GKLPRESDME…RLASSPVQPN (99 aa). Composition is skewed to polar residues over residues 401-410 and 419-431; these read PSATEDSLQP and ELPQ…QTKD. A Glycyl lysine isopeptide (Lys-Gly) (interchain with G-Cter in SUMO2) cross-link involves residue lysine 444. Residues 447 to 485 show a composition bias toward polar residues; sequence LFLTNQRPEIQPTTNKQSFSYTKIKSEPSSPRLASSPVQ. Lysine 471 is covalently cross-linked (Glycyl lysine isopeptide (Lys-Gly) (interchain with G-Cter in SUMO1)). Phosphoserine is present on serine 532. A CCHC FOG-type 2 zinc finger spans residues 542–575; that stretch reads PLMPKGATCFECNITFNNLDNYLVHKKHYCSSRW. Residues cysteine 550, cysteine 553, histidine 566, and cysteine 571 each contribute to the Zn(2+) site. A Phosphoserine modification is found at serine 581. The disordered stretch occupies residues 636-683; sequence GPNGKGHDKDFSTQTKKLSTSSNNDDKINGKPVDVKNPSVPLVDGESD. Over residues 647-658 the composition is skewed to polar residues; that stretch reads STQTKKLSTSSN. The CCHC FOG-type 3 zinc finger occupies 681–714; the sequence is ESDPNKTTCEACNITFSRHETYMVHKQYYCATRH. Residues cysteine 689, cysteine 692, histidine 705, and cysteine 710 each contribute to the Zn(2+) site. A Nuclear localization signal motif is present at residues 736–740; it reads RKRRK. An interaction with CTBP2 region spans residues 829-835; the sequence is PIDLSKK. The CCHC FOG-type 4 zinc finger occupies 848 to 881; it reads KRLLDYHECTVCKISFNKVENYLAHKQNFCPVTA. The Zn(2+) site is built by cysteine 856, cysteine 859, histidine 872, and cysteine 877. Serine 904 carries the phosphoserine modification. Glycyl lysine isopeptide (Lys-Gly) (interchain with G-Cter in SUMO1) cross-links involve residues lysine 915 and lysine 955. Phosphoserine is present on serine 1014. The tract at residues 1051 to 1095 is disordered; sequence DERPAANPQQENISQNPQHEDDHKSPSWISENPLAANENVSPGIP. The span at 1057–1067 shows a compositional bias: polar residues; that stretch reads NPQQENISQNP. The CCHC FOG-type 5 zinc-finger motif lies at 1113 to 1146; the sequence is QAPTSGKYCRLCDIQFNNLSNFITHKKFYCSSHA. Zn(2+) is bound by residues cysteine 1121, cysteine 1124, histidine 1137, and cysteine 1142.

It belongs to the FOG (Friend of GATA) family. As to quaternary structure, interacts with the N-terminal zinc-finger of GATA4, GATA5 and probably GATA6. Interacts with retinoid nuclear receptor RXRA when ligand bound. Interacts with corepressor CTBP2; this interaction is however not essential for corepressor activity. Able to bind GATA1 in vitro. Interacts with NR2F2 and NR2F6. Interacts with ATOH8; mediates indirect interaction with GATA4. Post-translationally, sumoylation reduces transcriptional repression activity. As to expression, widely expressed at low level.

It localises to the nucleus. In terms of biological role, transcription regulator that plays a central role in heart morphogenesis and development of coronary vessels from epicardium, by regulating genes that are essential during cardiogenesis. Essential cofactor that acts via the formation of a heterodimer with transcription factors of the GATA family GATA4, GATA5 and GATA6. Such heterodimer can both activate or repress transcriptional activity, depending on the cell and promoter context. Also required in gonadal differentiation, possibly be regulating expression of SRY. Probably acts a corepressor of NR2F2. This Homo sapiens (Human) protein is Zinc finger protein ZFPM2 (ZFPM2).